The primary structure comprises 118 residues: Ribonuclease P protein component (118 aa).

It belongs to the RnpA family. Consists of a catalytic RNA component (M1 or rnpB) and a protein subunit.

It catalyses the reaction Endonucleolytic cleavage of RNA, removing 5'-extranucleotides from tRNA precursor.. Functionally, RNaseP catalyzes the removal of the 5'-leader sequence from pre-tRNA to produce the mature 5'-terminus. It can also cleave other RNA substrates such as 4.5S RNA. The protein component plays an auxiliary but essential role in vivo by binding to the 5'-leader sequence and broadening the substrate specificity of the ribozyme. The sequence is that of Ribonuclease P protein component from Rickettsia rickettsii (strain Iowa).